The chain runs to 954 residues: Mycolic acid-containing lipids exporter MmpL11 (954 aa).

The next 12 helical transmembrane spans lie at 11–31 (FRWA…YLAL), 188–208 (IVLI…LPLV), 214–234 (VVVT…SVFV), 235–255 (TSTV…FILM), 279–299 (GLAV…IYLI), 312–334 (ILAV…ATFG), 373–393 (AIAA…MVLG), 529–549 (TQPL…LVSI), 559–579 (VLMT…VFQW), 597–617 (IPPL…IFLL), 648–668 (AALI…PLVA), and 670–690 (LGVA…LVLV).

It localises to the cell inner membrane. Its function is as follows. Contributes to cell wall biosynthesis and biofilm formation. Transports the mycolic acid-containing lipids monomeromycolyl diacylglycerol (MMDAG) and mycolate ester wax (WE) to the bacterial surface. The protein is Mycolic acid-containing lipids exporter MmpL11 of Mycolicibacterium smegmatis (strain ATCC 700084 / mc(2)155) (Mycobacterium smegmatis).